The following is a 493-amino-acid chain: Cytochrome P450 monooxygenase astA (493 aa).

A helical membrane pass occupies residues 5 to 25 (EIILLGLAALAVTYQVIVWIY). 2 N-linked (GlcNAc...) asparagine glycosylation sites follow: N174 and N286. C433 contacts heme.

Belongs to the cytochrome P450 family. Heme is required as a cofactor.

The protein resides in the membrane. The enzyme catalyses asperterpenoid A + reduced [NADPH--hemoprotein reductase] + O2 = asperterpenoid C + oxidized [NADPH--hemoprotein reductase] + H2O + H(+). It functions in the pathway secondary metabolite biosynthesis; terpenoid biosynthesis. In terms of biological role, cytochrome P450 monooxygenase; part of the gene cluster that mediates the biosynthesis of the asperterpenoids, sesterterpenes that exhibit anti-tuberculosis activity. The first step of the pathway is performed by the sesterterpene synthase astC that possesses both prenyl transferase and terpene cyclase activity, converting isopentenyl diphosphate and dimethylallyl diphosphate into geranylfarnesyl diphosphate (GFPP) and further converting GFPP into preasperterpenoid A, respectively. The cytochrome P450 monooxygenase astB then dually oxidizes preasperterpenoid A to produce asperterpenoid A along with a minor product, asperterpenoid B. Finally, the cytochrome P450 monooxygenase astA converts asperterpenoid A into asperterpenoid C. This chain is Cytochrome P450 monooxygenase astA, found in Talaromyces wortmannii (Penicillium wortmannii).